The sequence spans 778 residues: pH-response regulator protein palH/prr-4 (778 aa).

Topologically, residues 1–108 are extracellular; sequence MEPRQLFSDP…DPFYASTFPQ (108 aa). Residues 109–129 form a helical membrane-spanning segment; the sequence is CYALAATTIIAYTLVIMLFIT. Residues 130-160 are Periplasmic-facing; it reads PRSFLDGGVVVLGRKGFTNGGGGTSIGGRPW. A helical transmembrane segment spans residues 161 to 181; that stretch reads LQKVAALSVAISLTIANAATF. The Extracellular portion of the chain corresponds to 182–201; that stretch reads RAAEQQYSWGVQNAKQLQED. Residues 202-222 traverse the membrane as a helical segment; sequence VLGGAELKIIRIISDTFLWLA. Topologically, residues 223–237 are periplasmic; it reads QAQTLIRLFPRQREK. Residues 238–258 form a helical membrane-spanning segment; the sequence is VIIKWTAFALITLDVIFQSLN. The Extracellular portion of the chain corresponds to 259 to 275; sequence SFKYGGSDLTRPKFTEA. A helical transmembrane segment spans residues 276 to 296; the sequence is VPALSYLFALALGVLYAAWVL. The Periplasmic segment spans residues 297–314; it reads YYSIMKKRYAFYHPLMKN. A helical transmembrane segment spans residues 315–335; it reads MILVAVLSVVSILVPVVFFIL. Over 336-341 the chain is Extracellular; that stretch reads DISKPD. A helical membrane pass occupies residues 342–362; it reads FAGWGDYVRWVGAAAASVIVW. The Periplasmic segment spans residues 363–778; it reads EWVERIEALE…RSDSSTTPSP (416 aa). Disordered regions lie at residues 394 to 499, 514 to 605, and 660 to 778; these read ASQS…DTTS, ELTS…DENS, and ELNH…TPSP. Residues 446-456 are compositionally biased toward basic and acidic residues; that stretch reads HRTEPSSRNEP. A compositionally biased stretch (polar residues) spans 457-466; it reads NEGSSPVAET. 2 stretches are compositionally biased toward basic and acidic residues: residues 588–605 and 661–675; these read FVTR…DENS and LNHS…EESR. The span at 720–732 shows a compositional bias: polar residues; the sequence is PIVTQGSFTNNRY. A compositionally biased stretch (low complexity) spans 749–759; the sequence is ARAPSQPQSPS. The segment covering 769–778 has biased composition (polar residues); it reads RSDSSTTPSP.

The protein belongs to the palH/RIM21 family.

Its subcellular location is the cell membrane. Required for the proteolytic cleavage of the transcription factor pacc-1 in response to alkaline ambient pH. This is pH-response regulator protein palH/prr-4 (prr-4) from Neurospora crassa (strain ATCC 24698 / 74-OR23-1A / CBS 708.71 / DSM 1257 / FGSC 987).